The chain runs to 832 residues: AP-1 complex subunit gamma-1 (832 aa).

The 100-residue stretch at 733 to 832 folds into the GAE domain; the sequence is LNVYASLLSA…QFDHKFDETL (100 aa).

In terms of assembly, adapter protein complex 1 (AP-1) is a heterotetramer composed of two large adaptins (gamma-type subunit APL4 and beta-type subunit APL2), a medium adaptin (mu-type subunit APM1) and a small adaptin (sigma-type subunit APS1). AP-1 interacts with clathrin. Also a component of the AP-1R complex composed of at least APM2, APL4 and APS1.

It is found in the cytoplasm. It localises to the golgi apparatus membrane. The protein localises to the cytoplasmic vesicle. Its subcellular location is the clathrin-coated vesicle membrane. Functionally, adaptins are components of the adapter complexes which link clathrin to receptors in coated vesicles. Clathrin-associated protein complexes are believed to interact with the cytoplasmic tails of membrane proteins, leading to their selection and concentration. The AP-1 complex interacts directly with clathrin. Component of the AP-1-related (AP-1R) complex, an adapter protein complex that mediates sorting of cargo SNARE SNC1. In contrast to the APM1-containing AP-1 complex, AP-1R is incapable of sorting CHS3. The protein is AP-1 complex subunit gamma-1 (APL4) of Saccharomyces cerevisiae (strain ATCC 204508 / S288c) (Baker's yeast).